The chain runs to 609 residues: UvrABC system protein C (609 aa).

Positions 22 to 100 constitute a GIY-YIG domain; the sequence is EKPGVYQYLN…IKKYKPRYNV (79 aa). Residues 214 to 249 form the UVR domain; sequence QDISRMLVEKMQELANEMKFEEAQKIKEKYLLIENY.

Belongs to the UvrC family. Interacts with UvrB in an incision complex.

The protein localises to the cytoplasm. Functionally, the UvrABC repair system catalyzes the recognition and processing of DNA lesions. UvrC both incises the 5' and 3' sides of the lesion. The N-terminal half is responsible for the 3' incision and the C-terminal half is responsible for the 5' incision. This is UvrABC system protein C from Bacteroides thetaiotaomicron (strain ATCC 29148 / DSM 2079 / JCM 5827 / CCUG 10774 / NCTC 10582 / VPI-5482 / E50).